We begin with the raw amino-acid sequence, 392 residues long: 2'-deamino-2'-hydroxyneamine transaminase (392 aa).

Position 249 is an N6-(pyridoxal phosphate)lysine (Lys-249).

Belongs to the class-III pyridoxal-phosphate-dependent aminotransferase family. It depends on pyridoxal 5'-phosphate as a cofactor.

It carries out the reaction neamine + 2-oxoglutarate = 6'-oxoparomamine + L-glutamate. The enzyme catalyses 2'-deamino-2'-hydroxyneamine + 2-oxoglutarate = 2'-deamino-2'-hydroxy-6'-dehydroparomamine + L-glutamate. It functions in the pathway antibiotic biosynthesis; kanamycin biosynthesis. Functionally, aminotransferase that has 6'-oxoglucosaminyl:L-glutamate aminotransferase activity by catalyzing pyridoxal-5'-phosphate-mediated transamination leading to the conversion of paromamine to neamine in the biosynthetic pathway of kanamycin B. The polypeptide is 2'-deamino-2'-hydroxyneamine transaminase (kacL) (Streptomyces kanamyceticus).